We begin with the raw amino-acid sequence, 852 residues long: Bifunctional uridylyltransferase/uridylyl-removing enzyme (852 aa).

The tract at residues 1–318 (MPANLSSALE…STPLRVTLRI (318 aa)) is uridylyltransferase. Residues 319 to 672 (DDDYIQVNNQ…SRILPKSDSF (354 aa)) are uridylyl-removing. The HD domain maps to 436 to 558 (VDDHILTVVR…VQTHERLSAL (123 aa)). 2 consecutive ACT domains span residues 673–757 (QVMV…SRSR) and 785–852 (SVEI…EQLS).

Belongs to the GlnD family. Mg(2+) serves as cofactor.

It catalyses the reaction [protein-PII]-L-tyrosine + UTP = [protein-PII]-uridylyl-L-tyrosine + diphosphate. It carries out the reaction [protein-PII]-uridylyl-L-tyrosine + H2O = [protein-PII]-L-tyrosine + UMP + H(+). With respect to regulation, uridylyltransferase (UTase) activity is inhibited by glutamine, while glutamine activates uridylyl-removing (UR) activity. In terms of biological role, modifies, by uridylylation and deuridylylation, the PII regulatory proteins (GlnB and homologs), in response to the nitrogen status of the cell that GlnD senses through the glutamine level. Under low glutamine levels, catalyzes the conversion of the PII proteins and UTP to PII-UMP and PPi, while under higher glutamine levels, GlnD hydrolyzes PII-UMP to PII and UMP (deuridylylation). Thus, controls uridylylation state and activity of the PII proteins, and plays an important role in the regulation of nitrogen assimilation and metabolism. In Neisseria meningitidis serogroup B (strain ATCC BAA-335 / MC58), this protein is Bifunctional uridylyltransferase/uridylyl-removing enzyme.